The chain runs to 598 residues: UvrABC system protein C (598 aa).

The region spanning aspartate 14–isoleucine 91 is the GIY-YIG domain. The region spanning aspartate 196 to methionine 231 is the UVR domain.

Belongs to the UvrC family. Interacts with UvrB in an incision complex.

It localises to the cytoplasm. In terms of biological role, the UvrABC repair system catalyzes the recognition and processing of DNA lesions. UvrC both incises the 5' and 3' sides of the lesion. The N-terminal half is responsible for the 3' incision and the C-terminal half is responsible for the 5' incision. This Streptococcus pyogenes serotype M1 protein is UvrABC system protein C.